The primary structure comprises 979 residues: Translation initiation factor IF-2 (979 aa).

Positions 68–392 (VKQKQGTPAS…SRAAQDAMEL (325 aa)) are disordered. Composition is skewed to basic and acidic residues over residues 102–179 (QDMR…KPEE), 217–229 (EMEK…EVFR), and 260–273 (TKED…DADG). The segment covering 309–326 (PSGNKNNNRPAQQQSNAS) has biased composition (polar residues). Basic and acidic residues predominate over residues 347-356 (DVQRQVKETL). Residues 478 to 646 (ARPPIVTVMG…KVLLEADILE (169 aa)) enclose the tr-type G domain. The G1 stretch occupies residues 487 to 494 (GHVDHGKT). 487–494 (GHVDHGKT) provides a ligand contact to GTP. The tract at residues 512–516 (GITQH) is G2. The tract at residues 534-537 (DTPG) is G3. Residues 534–538 (DTPGH) and 588–591 (NKID) contribute to the GTP site. A G4 region spans residues 588 to 591 (NKID). Residues 624–626 (SAK) form a G5 region.

This sequence belongs to the TRAFAC class translation factor GTPase superfamily. Classic translation factor GTPase family. IF-2 subfamily.

The protein resides in the cytoplasm. Functionally, one of the essential components for the initiation of protein synthesis. Protects formylmethionyl-tRNA from spontaneous hydrolysis and promotes its binding to the 30S ribosomal subunits. Also involved in the hydrolysis of GTP during the formation of the 70S ribosomal complex. In Porphyromonas gingivalis (strain ATCC 33277 / DSM 20709 / CIP 103683 / JCM 12257 / NCTC 11834 / 2561), this protein is Translation initiation factor IF-2.